A 150-amino-acid polypeptide reads, in one-letter code: Translation machinery-associated protein 17 (150 aa).

Phosphoserine occurs at positions 24 and 68. The disordered stretch occupies residues 110–139 (RKTGHGKSKHEVEAKDNTNKGPDVDMDNSN). Positions 118–127 (KHEVEAKDNT) are enriched in basic and acidic residues.

In terms of assembly, interacts with RPT6. Interacts with the 40S and 60S ribosomal subunits.

It localises to the cytoplasm. The protein resides in the nucleus. Functionally, ATPase-dedicated chaperone that assists the formation of the RPT6-RPT3 ATPase pair, an early step in proteasome assembly. Plays a key role in maintaining homeostatic proteasome levels and adjusting proteasome assembly when demands increase, such as during proteasome stresses. Function overlaps with RPN14. This is Translation machinery-associated protein 17 (TMA17) from Saccharomyces cerevisiae (strain ATCC 204508 / S288c) (Baker's yeast).